Consider the following 207-residue polypeptide: Oligoribonuclease (207 aa).

In terms of domain architecture, Exonuclease spans 20 to 183 (LVWLDMEMTG…ADIHESIDEL (164 aa)). Tyrosine 141 is an active-site residue.

The protein belongs to the oligoribonuclease family.

The protein localises to the cytoplasm. Its function is as follows. 3'-to-5' exoribonuclease specific for small oligoribonucleotides. In Paraburkholderia xenovorans (strain LB400), this protein is Oligoribonuclease.